The chain runs to 455 residues: Transcriptional regulatory protein FlbD (455 aa).

In terms of domain architecture, Response regulatory spans 2-114; sequence RLLVVGKLNG…LIAAVLAAVT (113 aa). The Sigma-54 factor interaction domain maps to 120–349; sequence MVVRDPAMEQ…LENAMHRAVL (230 aa). ATP contacts are provided by residues 148–155 and 211–220; these read GESGSGKE and ADGGTLLLDE. The segment at residues 416 to 435 is a DNA-binding region (H-T-H motif); the sequence is RTHAANILGISIRTLRNKLK.

Its subcellular location is the cytoplasm. In terms of biological role, activation of sigma-54-dependent flagellar gene promoters and strong negative autoregulatory effects on its own promoter. The synthesis and function of FlbD in C.crescentus is controlled by an internal cell-cycle clock. This Caulobacter vibrioides (strain ATCC 19089 / CIP 103742 / CB 15) (Caulobacter crescentus) protein is Transcriptional regulatory protein FlbD (flbD).